The sequence spans 102 residues: Small ribosomal subunit protein uS10 (102 aa).

Belongs to the universal ribosomal protein uS10 family. In terms of assembly, part of the 30S ribosomal subunit.

Its function is as follows. Involved in the binding of tRNA to the ribosomes. This is Small ribosomal subunit protein uS10 from Nocardioides sp. (strain ATCC BAA-499 / JS614).